Consider the following 448-residue polypeptide: Trigger factor (448 aa).

The 87-residue stretch at 167-253 folds into the PPIase FKBP-type domain; the sequence is GSIVRVDFVE…IKDIKKRDIP (87 aa).

Belongs to the FKBP-type PPIase family. Tig subfamily.

It is found in the cytoplasm. It carries out the reaction [protein]-peptidylproline (omega=180) = [protein]-peptidylproline (omega=0). Its function is as follows. Involved in protein export. Acts as a chaperone by maintaining the newly synthesized protein in an open conformation. Functions as a peptidyl-prolyl cis-trans isomerase. The polypeptide is Trigger factor (Borrelia hermsii (strain HS1 / DAH)).